A 436-amino-acid polypeptide reads, in one-letter code: Histone acetyltransferase type B subunit 2 (436 aa).

The span at 1 to 19 (MEPYDDGFIEEQEEQEEER) shows a compositional bias: acidic residues. Positions 1 to 22 (MEPYDDGFIEEQEEQEEERTEE) are disordered. WD repeat units follow at residues 136–176 (DHKG…SLPT), 187–227 (GHTK…KGNK), 237–277 (HHSS…TTRA), 284–324 (QHRD…TKLH), and 328–368 (CHTD…EEQT). Residues 370–374 (DDAQD) are interaction with the histone H4 N-terminus. One copy of the WD 6 repeat lies at 385-425 (GHTNRISDFSWNLNDPWVLCSAAEDNLLQVWKVADAIVGKD).

The protein belongs to the WD repeat RBAP46/RBAP48/MSI1 family. In terms of assembly, component of the HAT-B complex composed of at least hat1 and hat2. The HAT-B complex binds to histone H4 tail.

Its subcellular location is the cytoplasm. It is found in the nucleus. Regulatory subunit of the histone acetylase B (HAT-B) complex. The complex acetylates 'Lys-12' of histone H4 which is required for telomeric silencing. The polypeptide is Histone acetyltransferase type B subunit 2 (hat2) (Aspergillus oryzae (strain ATCC 42149 / RIB 40) (Yellow koji mold)).